Consider the following 237-residue polypeptide: Ubiquinone biosynthesis O-methyltransferase (237 aa).

4 residues coordinate S-adenosyl-L-methionine: arginine 38, glycine 58, aspartate 79, and methionine 124.

It belongs to the methyltransferase superfamily. UbiG/COQ3 family.

The enzyme catalyses a 3-demethylubiquinol + S-adenosyl-L-methionine = a ubiquinol + S-adenosyl-L-homocysteine + H(+). It catalyses the reaction a 3-(all-trans-polyprenyl)benzene-1,2-diol + S-adenosyl-L-methionine = a 2-methoxy-6-(all-trans-polyprenyl)phenol + S-adenosyl-L-homocysteine + H(+). Its pathway is cofactor biosynthesis; ubiquinone biosynthesis. Its function is as follows. O-methyltransferase that catalyzes the 2 O-methylation steps in the ubiquinone biosynthetic pathway. The protein is Ubiquinone biosynthesis O-methyltransferase of Acinetobacter baumannii (strain AB307-0294).